Reading from the N-terminus, the 972-residue chain is Aminopeptidase N (972 aa).

At 2 to 17 (TSQGRTRTLLNLTPIR) the chain is on the cytoplasmic side. A helical; Signal-anchor for type II membrane protein membrane pass occupies residues 18–39 (LIVALFLVAAAVGLSIGLTYYF). The Extracellular portion of the chain corresponds to 40–972 (TRKAFDTSEK…LAAFFKKATL (933 aa)). Positions 47 to 62 (SEKPGKDDTGGKDKDN) are enriched in basic and acidic residues. The disordered stretch occupies residues 47 to 66 (SEKPGKDDTGGKDKDNSPSA). N99 carries an N-linked (GlcNAc...) asparagine glycan. E208 contributes to the substrate binding site. The N-linked (GlcNAc...) asparagine glycan is linked to N227. 343 to 347 (GAMEN) provides a ligand contact to substrate. H379 serves as a coordination point for Zn(2+). The active-site Proton acceptor is E380. Residues H383 and E402 each contribute to the Zn(2+) site. A glycan (N-linked (GlcNAc...) asparagine) is linked at N549. 2 cysteine pairs are disulfide-bonded: C759–C766 and C804–C840. N858 carries N-linked (GlcNAc...) asparagine glycosylation.

Belongs to the peptidase M1 family. The cofactor is Zn(2+).

Its subcellular location is the membrane. It catalyses the reaction Release of an N-terminal amino acid, Xaa-|-Yaa- from a peptide, amide or arylamide. Xaa is preferably Ala, but may be most amino acids including Pro (slow action). When a terminal hydrophobic residue is followed by a prolyl residue, the two may be released as an intact Xaa-Pro dipeptide.. The sequence is that of Aminopeptidase N from Haemonchus contortus (Barber pole worm).